The following is a 108-amino-acid chain: Nucleoid-associated protein Bpet3552 (108 aa).

This sequence belongs to the YbaB/EbfC family. In terms of assembly, homodimer.

The protein resides in the cytoplasm. The protein localises to the nucleoid. Its function is as follows. Binds to DNA and alters its conformation. May be involved in regulation of gene expression, nucleoid organization and DNA protection. This Bordetella petrii (strain ATCC BAA-461 / DSM 12804 / CCUG 43448) protein is Nucleoid-associated protein Bpet3552.